The chain runs to 157 residues: Peptide methionine sulfoxide reductase MsrA (157 aa).

Residue Cys-10 is part of the active site.

It belongs to the MsrA Met sulfoxide reductase family.

It carries out the reaction L-methionyl-[protein] + [thioredoxin]-disulfide + H2O = L-methionyl-(S)-S-oxide-[protein] + [thioredoxin]-dithiol. The catalysed reaction is [thioredoxin]-disulfide + L-methionine + H2O = L-methionine (S)-S-oxide + [thioredoxin]-dithiol. Has an important function as a repair enzyme for proteins that have been inactivated by oxidation. Catalyzes the reversible oxidation-reduction of methionine sulfoxide in proteins to methionine. The polypeptide is Peptide methionine sulfoxide reductase MsrA (Clostridium perfringens (strain SM101 / Type A)).